A 419-amino-acid polypeptide reads, in one-letter code: Protein FAM181B (419 aa).

The segment at 107–157 is disordered; that stretch reads LMGAAPPGPSSPGAADTPAKRPLAGAQTVPVPVPAHGKAAPRREASQAAAA.

It belongs to the FAM181 family.

This chain is Protein FAM181B (FAM181B), found in Bos taurus (Bovine).